An 89-amino-acid polypeptide reads, in one-letter code: Small ribosomal subunit protein uS15 (89 aa).

The protein belongs to the universal ribosomal protein uS15 family. In terms of assembly, part of the 30S ribosomal subunit. Forms a bridge to the 50S subunit in the 70S ribosome, contacting the 23S rRNA.

One of the primary rRNA binding proteins, it binds directly to 16S rRNA where it helps nucleate assembly of the platform of the 30S subunit by binding and bridging several RNA helices of the 16S rRNA. Its function is as follows. Forms an intersubunit bridge (bridge B4) with the 23S rRNA of the 50S subunit in the ribosome. The protein is Small ribosomal subunit protein uS15 of Nocardia farcinica (strain IFM 10152).